The sequence spans 134 residues: Alkaline proteinase inhibitor (134 aa).

A signal peptide spans 1–26 (MVFAAWYLKFAFFVALAFSIIGGSMA). Cysteines 50 and 73 form a disulfide.

Belongs to the protease inhibitor I38 family.

The protein localises to the periplasm. Its function is as follows. Inhibitor of the alkaline protease. This Photorhabdus luminescens (Xenorhabdus luminescens) protein is Alkaline proteinase inhibitor (inh).